Here is a 485-residue protein sequence, read N- to C-terminus: Ribulose bisphosphate carboxylase large chain (485 aa).

A propeptide spanning residues 1–2 (MS) is cleaved from the precursor. P3 is modified (N-acetylproline). Position 14 is an N6,N6,N6-trimethyllysine (K14). 2 residues coordinate substrate: N123 and T173. The active-site Proton acceptor is K175. Residue K177 coordinates substrate. The Mg(2+) site is built by K201, D203, and E204. K201 carries the post-translational modification N6-carboxylysine. The active-site Proton acceptor is the H294. Residues R295, H327, and S379 each coordinate substrate.

It belongs to the RuBisCO large chain family. Type I subfamily. As to quaternary structure, heterohexadecamer of 8 large chains and 8 small chains; disulfide-linked. The disulfide link is formed within the large subunit homodimers. Mg(2+) is required as a cofactor. The disulfide bond which can form in the large chain dimeric partners within the hexadecamer appears to be associated with oxidative stress and protein turnover.

It localises to the plastid. The protein localises to the chloroplast. The enzyme catalyses 2 (2R)-3-phosphoglycerate + 2 H(+) = D-ribulose 1,5-bisphosphate + CO2 + H2O. It carries out the reaction D-ribulose 1,5-bisphosphate + O2 = 2-phosphoglycolate + (2R)-3-phosphoglycerate + 2 H(+). Functionally, ruBisCO catalyzes two reactions: the carboxylation of D-ribulose 1,5-bisphosphate, the primary event in carbon dioxide fixation, as well as the oxidative fragmentation of the pentose substrate in the photorespiration process. Both reactions occur simultaneously and in competition at the same active site. The chain is Ribulose bisphosphate carboxylase large chain from Flaveria bidentis (Coastal plain yellowtops).